Reading from the N-terminus, the 63-residue chain is Conotoxin Vi5.1b (63 aa).

Residues 1-22 (MLCVPVFIILFIIIPFAPTSES) form the signal peptide. The propeptide occupies 23-50 (QPKTKEEVAKASVHDNAERTLQRLWNQS). Proline amide is present on proline 62.

Belongs to the conotoxin T superfamily. In terms of processing, contains 2 disulfide bonds that can be either 'C1-C3, C2-C4' or 'C1-C4, C2-C3', since these disulfide connectivities have been observed for conotoxins with cysteine framework V (for examples, see AC P0DQQ7 and AC P81755). Expressed by the venom duct.

Its subcellular location is the secreted. The polypeptide is Conotoxin Vi5.1b (Conus virgo (Virgin cone)).